The sequence spans 215 residues: Large ribosomal subunit protein uL4c (215 aa).

Residues 48 to 57 (SQRQGTISTK) show a composition bias toward polar residues. The disordered stretch occupies residues 48–85 (SQRQGTISTKTRSEVRGGGRKPWRQKGTGRARAGSSRS). Positions 65 to 76 (GGRKPWRQKGTG) are enriched in basic residues.

The protein belongs to the universal ribosomal protein uL4 family. As to quaternary structure, part of the 50S ribosomal subunit.

Its subcellular location is the plastid. The protein resides in the chloroplast. Its function is as follows. Probably binds the 23S rRNA. This Trieres chinensis (Marine centric diatom) protein is Large ribosomal subunit protein uL4c (rpl4).